Reading from the N-terminus, the 2281-residue chain is Protein Ycf2 (2281 aa).

1634 to 1641 provides a ligand contact to ATP; that stretch reads GSIGTGRS.

It belongs to the Ycf2 family.

It localises to the plastid. Its subcellular location is the chloroplast stroma. Probable ATPase of unknown function. Its presence in a non-photosynthetic plant (Epifagus virginiana) and experiments in tobacco indicate that it has an essential function which is probably not related to photosynthesis. The protein is Protein Ycf2 of Buxus microphylla (Littleleaf boxwood).